The chain runs to 527 residues: Splicing factor MUD2 (527 aa).

Residues 36 to 169 (DNAVIDTHFK…SKFNGDRDKR (134 aa)) form a disordered region. Residues 42–55 (THFKRQKSDGELPK) are compositionally biased toward basic and acidic residues. At S49 the chain carries Phosphoserine. Polar residues predominate over residues 60–85 (RNVSHSNNRGPSSIITMSTNRTTYEQ). Basic and acidic residues predominate over residues 94 to 109 (SYRDASGRSYNRENRY). The span at 110–122 (SSHNTGPQWNNNP) shows a compositional bias: polar residues. 2 stretches are compositionally biased toward basic and acidic residues: residues 125-141 (RQRD…DRRG) and 155-169 (RKNE…RDKR). One can recognise an RRM domain in the interval 424–511 (LLLLNCLDPL…QFNDRTVLCT (88 aa)).

MSL5, MUD2 and PRP40 interact to form the commitment complex 2 (CC2), a precursor of mature spliceosomes.

Functionally, splicing factor that contacts pre-mRNA directly and is a component of the pre-mRNA-U1 snRNP complex (commitment complex 2) that forms during early spliceosome assembly in yeast extracts. This chain is Splicing factor MUD2 (MUD2), found in Saccharomyces cerevisiae (strain ATCC 204508 / S288c) (Baker's yeast).